A 314-amino-acid chain; its full sequence is Homeobox protein knotted-1-like 3 (314 aa).

The ELK domain occupies Glu218–Ile238. The homeobox; TALE-type DNA-binding region spans Leu239 to Asn302.

It belongs to the TALE/KNOX homeobox family. As to expression, isoform 1 is expressed in roots and flowers, and at lower levels in leaf blades and leaf sheaths. Isoform 2 is expressed in roots and flowers.

It is found in the nucleus. The chain is Homeobox protein knotted-1-like 3 (HOS66) from Oryza sativa subsp. japonica (Rice).